Here is a 92-residue protein sequence, read N- to C-terminus: RNA-binding protein Hfq (92 aa).

One can recognise a Sm domain in the interval 9–68; that stretch reads DPFLNALRRERVPVSIYLVNGIKLQGQVESFDQFVILLKNTVSQMVYKHAISTVVPSRPF. Over residues 73–82 the composition is skewed to polar residues; that stretch reads HQATNAQAGY. The tract at residues 73-92 is disordered; it reads HQATNAQAGYNAQHDDGDEK.

It belongs to the Hfq family. Homohexamer.

Functionally, RNA chaperone that binds small regulatory RNA (sRNAs) and mRNAs to facilitate mRNA translational regulation in response to envelope stress, environmental stress and changes in metabolite concentrations. Also binds with high specificity to tRNAs. This chain is RNA-binding protein Hfq, found in Shewanella pealeana (strain ATCC 700345 / ANG-SQ1).